A 362-amino-acid polypeptide reads, in one-letter code: 3-isopropylmalate dehydrogenase (362 aa).

78–91 is a binding site for NAD(+); sequence GPKWESLPPDEQPE. Positions 99, 109, 138, and 227 each coordinate substrate. The Mg(2+) site is built by D227, D251, and D255. 285–297 is an NAD(+) binding site; sequence GSAPDIAGQGIAN.

The protein belongs to the isocitrate and isopropylmalate dehydrogenases family. LeuB type 1 subfamily. Homodimer. The cofactor is Mg(2+). It depends on Mn(2+) as a cofactor.

Its subcellular location is the cytoplasm. It carries out the reaction (2R,3S)-3-isopropylmalate + NAD(+) = 4-methyl-2-oxopentanoate + CO2 + NADH. It functions in the pathway amino-acid biosynthesis; L-leucine biosynthesis; L-leucine from 3-methyl-2-oxobutanoate: step 3/4. Catalyzes the oxidation of 3-carboxy-2-hydroxy-4-methylpentanoate (3-isopropylmalate) to 3-carboxy-4-methyl-2-oxopentanoate. The product decarboxylates to 4-methyl-2 oxopentanoate. The sequence is that of 3-isopropylmalate dehydrogenase from Geobacter sulfurreducens (strain ATCC 51573 / DSM 12127 / PCA).